Here is a 1407-residue protein sequence, read N- to C-terminus: MNTSQATRAALFLNGSNRQAMLLQRSSMSQLWGSVRMRTSRLSLNRTKAVSLRCSAQPNKPKAAVSTGSFVTADELPSLVEKPAAEVIHFYRVPLIQESANAELLKAVQTKISNQIVSLTTEQSFNIGLESKLKDEKLSVLKWILQETYEPENLGTDSFLERKKQEGLHAVIVEVGPRLSFTTAWSTNAVSICRACGLDEVTRLERSRRYLLFSKEPLLENQIKEFAAMVHDRMTECVYTQKLVSFETNVVPEEVKYVPVMEKGRKALEEINQEMGLAFDEQDLQYYTRLFREDIKRDPTNVELFDIAQSNSEHSRHWFFAGNMVIDGKPMDKSLMQIVKSTWEANRNNSVIGFKDNSSAIRGFLVNQLRPLLPGSVCLLDVSARDLDILFTAETHNFPCAVAPYPGAETGAGGRIRDTHATGRGSFVVASTSGYCVGNLNMEGSYAPWEDSSFQYPSNLASPLQILIDASNGASDYGNKFGEPMIQGYTRTFGMRLPSGDRREWLKPIMFSAGIGQIDHTHITKGEPEVGMLVVKIGGPAYRIGMGGGAASSMVSGQNDAELDFNAVQRGDAEMSQKLYRVVRACIEMGEKNPIISIHDQGAGGNCNVVKEIIYPQGAEIDIRAVVVGDHTMSVLEIWGAEYQEQDAILVKAESREILQSICKRERLSMAVIGTINGGGRCTLIDSTAAAKCSKEGLPPPPPAVDLELEKVLGDMPKKTFKFNRIAYAREPLDIAPGITLMDALKRVLRLPSVSSKRFLTTKVDRCVTGLVAQQQTVGPLQITLADVAVIAQTFTDLTGGACAIGEQPIKGLLDPKAMARLAVGEALTNLVWAKVTALSDVKASGNWMYAAKLEGEGSAMYDAAIALSEAMIELGIAIDGGKDSLSMAAHADGEVVKAPGNLVISAYVTCPDITKTVTPDLKLGGDDGILLHVDLAKGKRRLGGSALAQVFGQIGNDCPDLDDVPYLKNVFDGVQALIAENLVSAGHDISDGGLVVTALEMAFAGNKGINLDLASNGISLFETLFSEELGLVLEISKTNLDAVMEKLRAFDVTAEIIGNVTDSPLIEVKVDGITHLSEKTSFLRDMWEDTSFQLEKLQRLASCVEMEKEGLKFRHEPNWKLSFIPSSTNNNYMSQDVKPKVAVIREEGSNGDREMSAAFYAAGFEPWDVTVSDLLAGDITLDQFRGIVFVGGFSYADVLDSAKGWAASIRFNEPVLSQFQEFYKRPDTFSLGICNGCQLMALLGWVPGPQVGGSLDTSQPRFVHNESGRFECRFTSVTIKDSPSIMLKGMEGSTLGVWAAHGEGRAYFPDEGVLDHMLHSDLAPLRYCDDDGNVTEAYPFNLNGSPLGIAAICSPDGRHLAMMPHPERCFLMWQFPWYPTSWDVEKAGPSPWLKMFQNARDWLESC.

A chloroplast and mitochondrion-targeting transit peptide spans 1–53 (MNTSQATRAALFLNGSNRQAMLLQRSSMSQLWGSVRMRTSRLSLNRTKAVSLR). Residues 407-418 (GAETGAGGRIRD), 487-489 (QGY), and Ala-786 each bind ATP. 4 residues coordinate Mg(2+): Asp-787, Glu-826, Asn-830, and Asp-989. Residue Ser-991 participates in ATP binding. Residues 1141 to 1381 (KVAVIREEGS…LMWQFPWYPT (241 aa)) enclose the Glutamine amidotransferase type-1 domain. Cys-1235 functions as the Nucleophile in the catalytic mechanism. Active-site residues include His-1366 and Glu-1368.

It in the N-terminal section; belongs to the FGAMS family.

Its subcellular location is the plastid. The protein localises to the chloroplast. It is found in the mitochondrion. It carries out the reaction N(2)-formyl-N(1)-(5-phospho-beta-D-ribosyl)glycinamide + L-glutamine + ATP + H2O = 2-formamido-N(1)-(5-O-phospho-beta-D-ribosyl)acetamidine + L-glutamate + ADP + phosphate + H(+). It participates in purine metabolism; IMP biosynthesis via de novo pathway; 5-amino-1-(5-phospho-D-ribosyl)imidazole from N(2)-formyl-N(1)-(5-phospho-D-ribosyl)glycinamide: step 1/2. Functionally, essential to the male gametophyte development. Phosphoribosylformylglycinamidine synthase involved in the purines biosynthetic pathway. Catalyzes the ATP-dependent conversion of formylglycinamide ribonucleotide (FGAR) and glutamine to yield formylglycinamidine ribonucleotide (FGAM) and glutamate. This is Probable phosphoribosylformylglycinamidine synthase, chloroplastic/mitochondrial from Arabidopsis thaliana (Mouse-ear cress).